Here is a 308-residue protein sequence, read N- to C-terminus: Ribonuclease Z (308 aa).

Residues His60, His62, Asp64, His65, His140, Asp209, and His269 each coordinate Zn(2+). Asp64 (proton acceptor) is an active-site residue.

This sequence belongs to the RNase Z family. Homodimer. Zn(2+) serves as cofactor.

It catalyses the reaction Endonucleolytic cleavage of RNA, removing extra 3' nucleotides from tRNA precursor, generating 3' termini of tRNAs. A 3'-hydroxy group is left at the tRNA terminus and a 5'-phosphoryl group is left at the trailer molecule.. Its function is as follows. Zinc phosphodiesterase, which displays some tRNA 3'-processing endonuclease activity. Probably involved in tRNA maturation, by removing a 3'-trailer from precursor tRNA. The protein is Ribonuclease Z of Methanococcus maripaludis (strain C6 / ATCC BAA-1332).